The primary structure comprises 283 residues: Myeloid differentiation primary response protein MyD88-A (283 aa).

The region spanning 27–105 (RLCLYLNPDA…DILTDLGPLI (79 aa)) is the Death domain. The interval 106–143 (EADCMKYLEKKHVPLPIQDDKVDSSEQYRITKSDDPYG) is intermediate domain. The 135-residue stretch at 147–281 (ETFDAFICYC…WFWDKLAKAL (135 aa)) folds into the TIR domain.

Its subcellular location is the cytoplasm. Its function is as follows. Adapter protein involved in the Toll-like receptor and IL-1 receptor signaling pathway in the innate immune response. Activates expression of target genes in the Spemann organizer region during early embryonic development. Is required for normal axis formation. The polypeptide is Myeloid differentiation primary response protein MyD88-A (myd88-a) (Xenopus laevis (African clawed frog)).